The following is a 490-amino-acid chain: Cytochrome P450 2C13, male-specific (490 aa).

Cys435 is a binding site for heme.

This sequence belongs to the cytochrome P450 family. Heme serves as cofactor. Liver, and to a lesser extent in prostate, kidney, heart and brain.

The protein resides in the endoplasmic reticulum membrane. It localises to the microsome membrane. The catalysed reaction is an organic molecule + reduced [NADPH--hemoprotein reductase] + O2 = an alcohol + oxidized [NADPH--hemoprotein reductase] + H2O + H(+). Cytochromes P450 are a group of heme-thiolate monooxygenases. In liver microsomes, this enzyme is involved in an NADPH-dependent electron transport pathway. It oxidizes a variety of structurally unrelated compounds, including steroids, fatty acids, and xenobiotics. In Rattus norvegicus (Rat), this protein is Cytochrome P450 2C13, male-specific (Cyp2c13).